A 932-amino-acid chain; its full sequence is Glycine dehydrogenase (decarboxylating) (932 aa).

The residue at position 685 (K685) is an N6-(pyridoxal phosphate)lysine.

This sequence belongs to the GcvP family. In terms of assembly, the glycine cleavage system is composed of four proteins: P, T, L and H. Pyridoxal 5'-phosphate is required as a cofactor.

It catalyses the reaction N(6)-[(R)-lipoyl]-L-lysyl-[glycine-cleavage complex H protein] + glycine + H(+) = N(6)-[(R)-S(8)-aminomethyldihydrolipoyl]-L-lysyl-[glycine-cleavage complex H protein] + CO2. In terms of biological role, the glycine cleavage system catalyzes the degradation of glycine. The P protein binds the alpha-amino group of glycine through its pyridoxal phosphate cofactor; CO(2) is released and the remaining methylamine moiety is then transferred to the lipoamide cofactor of the H protein. The chain is Glycine dehydrogenase (decarboxylating) from Brucella canis (strain ATCC 23365 / NCTC 10854 / RM-666).